The primary structure comprises 261 residues: Calcium-binding protein 8 (261 aa).

A disordered region spans residues 1–41 (MRLPEQPGDGKPENETKGDQETPERGEEPRRSPAPDFPTWE). The Cytoplasmic segment spans residues 1-234 (MRLPEQPGDG…QNRQTCVRKS (234 aa)). Basic and acidic residues predominate over residues 8–33 (GDGKPENETKGDQETPERGEEPRRSP). EF-hand domains lie at 78-113 (EELDEIREAFRVLDRDGNGFISKQELGMAMRSLGYM) and 114-149 (PSEVELAIIMQRLDMDGDGQVDFDEFMTILGPKLVS). Ca(2+) contacts are provided by Asp91, Asp93, Asn95, Glu102, Asp127, Asp129, Asp131, Gln133, and Glu138. Residues 235 to 255 (LICAFAMAFIISVMLIAANQI) form a helical; Anchor for type IV membrane protein membrane-spanning segment. Residues 256–261 (LRSGME) are Extracellular-facing.

As to quaternary structure, interacts with PI4KB. This binding competes with FREQ/NCS1 binding in a calcium-dependent manner. Brain-specific. High expression in the cerebellum, hippocampus, and cortex.

The protein localises to the golgi apparatus. It localises to the trans-Golgi network membrane. Its subcellular location is the cytoplasm. It is found in the perinuclear region. The protein resides in the cell membrane. Negatively regulates Golgi-to-plasma membrane trafficking by interacting with PI4KB and inhibiting its activity. May play a role in the physiology of neurons and is potentially important in memory and learning. The chain is Calcium-binding protein 8 (Caln1) from Mus musculus (Mouse).